Here is a 443-residue protein sequence, read N- to C-terminus: Ribulose bisphosphate carboxylase large chain (443 aa).

The substrate site is built by N89 and T139. K141 acts as the Proton acceptor in catalysis. A substrate-binding site is contributed by K143. Mg(2+) contacts are provided by K167, D169, and E170. Residue K167 is modified to N6-carboxylysine. The Proton acceptor role is filled by H260. The substrate site is built by R261, H293, and S345.

This sequence belongs to the RuBisCO large chain family. Type I subfamily. Heterohexadecamer of 8 large chains and 8 small chains; disulfide-linked. The disulfide link is formed within the large subunit homodimers. Mg(2+) serves as cofactor. In terms of processing, the disulfide bond which can form in the large chain dimeric partners within the hexadecamer appears to be associated with oxidative stress and protein turnover.

Its subcellular location is the plastid. The protein resides in the chloroplast. It catalyses the reaction 2 (2R)-3-phosphoglycerate + 2 H(+) = D-ribulose 1,5-bisphosphate + CO2 + H2O. The catalysed reaction is D-ribulose 1,5-bisphosphate + O2 = 2-phosphoglycolate + (2R)-3-phosphoglycerate + 2 H(+). Its function is as follows. RuBisCO catalyzes two reactions: the carboxylation of D-ribulose 1,5-bisphosphate, the primary event in carbon dioxide fixation, as well as the oxidative fragmentation of the pentose substrate in the photorespiration process. Both reactions occur simultaneously and in competition at the same active site. This Villarsia calthifolia (Marsh flower) protein is Ribulose bisphosphate carboxylase large chain.